Reading from the N-terminus, the 284-residue chain is Transmembrane protein 163b (284 aa).

The disordered stretch occupies residues 1-44; it reads MTDSSSASDPTAGPVDPGPAPSAPDPALEDPASTPANGHHPNQA. Over 1-83 the chain is Cytoplasmic; sequence MTDSSSASDP…HEAQSYRKKA (83 aa). Residues 84-104 traverse the membrane as a helical segment; it reads LWVSWVSIVVTMILAIAAFTV. Topologically, residues 105–111 are extracellular; it reads SIMRHSA. Residues 112–132 form a helical membrane-spanning segment; the sequence is SAFGFAFDATLDVLSSIIVLW. Over 133–145 the chain is Cytoplasmic; sequence RYSNAAAVHSAHR. The chain crosses the membrane as a helical span at residues 146 to 166; it reads EYIACVILGVVFILSAITILV. At 167 to 182 the chain is on the extracellular side; sequence KAIHDLATKLEPEVDD. Residues 183-203 form a helical membrane-spanning segment; sequence FLYSVSVISGVVCTVLCVCKF. The Cytoplasmic segment spans residues 204–212; it reads MLGKVLTSR. A helical transmembrane segment spans residues 213-233; sequence ALITDGFNSLVGGVMGFSILI. Residues 234-243 are Extracellular-facing; it reads SAEVFKHEPS. The chain crosses the membrane as a helical span at residues 244–264; sequence VWFLDGTIGILIGLIILAYGV. Residues 265–284 lie on the Cytoplasmic side of the membrane; sequence KLLKDMVPRIRQTRHYERFE.

It belongs to the TMEM163 family.

The protein localises to the cytoplasmic vesicle. Its subcellular location is the secretory vesicle. The protein resides in the synaptic vesicle membrane. It is found in the early endosome membrane. It localises to the late endosome membrane. The protein localises to the lysosome membrane. Its subcellular location is the cell membrane. It carries out the reaction Zn(2+)(in) = Zn(2+)(out). Functionally, zinc ion transporter that mediates zinc efflux and plays a crucial role in intracellular zinc homeostasis. Binds the divalent cations Zn(2+), Ni(2+), and to a minor extent Cu(2+). Is a functional modulator of P2X purinoceptors, including P2RX1, P2RX3, P2RX4 and P2RX7. Plays a role in central nervous system development and is required for myelination, and survival and proliferation of oligodendrocytes. The protein is Transmembrane protein 163b of Danio rerio (Zebrafish).